A 196-amino-acid polypeptide reads, in one-letter code: Imidazole glycerol phosphate synthase subunit HisH (196 aa).

One can recognise a Glutamine amidotransferase type-1 domain in the interval 2-196 (KVVILDTGCA…AQLLKNFLEM (195 aa)). Residue Cys77 is the Nucleophile of the active site. Residues His178 and Glu180 contribute to the active site.

As to quaternary structure, heterodimer of HisH and HisF.

The protein resides in the cytoplasm. The enzyme catalyses 5-[(5-phospho-1-deoxy-D-ribulos-1-ylimino)methylamino]-1-(5-phospho-beta-D-ribosyl)imidazole-4-carboxamide + L-glutamine = D-erythro-1-(imidazol-4-yl)glycerol 3-phosphate + 5-amino-1-(5-phospho-beta-D-ribosyl)imidazole-4-carboxamide + L-glutamate + H(+). It catalyses the reaction L-glutamine + H2O = L-glutamate + NH4(+). It participates in amino-acid biosynthesis; L-histidine biosynthesis; L-histidine from 5-phospho-alpha-D-ribose 1-diphosphate: step 5/9. IGPS catalyzes the conversion of PRFAR and glutamine to IGP, AICAR and glutamate. The HisH subunit catalyzes the hydrolysis of glutamine to glutamate and ammonia as part of the synthesis of IGP and AICAR. The resulting ammonia molecule is channeled to the active site of HisF. This is Imidazole glycerol phosphate synthase subunit HisH from Pectobacterium atrosepticum (strain SCRI 1043 / ATCC BAA-672) (Erwinia carotovora subsp. atroseptica).